Consider the following 115-residue polypeptide: Ribonuclease P protein component (115 aa).

It belongs to the RnpA family. Consists of a catalytic RNA component (M1 or rnpB) and a protein subunit.

The enzyme catalyses Endonucleolytic cleavage of RNA, removing 5'-extranucleotides from tRNA precursor.. Functionally, RNaseP catalyzes the removal of the 5'-leader sequence from pre-tRNA to produce the mature 5'-terminus. It can also cleave other RNA substrates such as 4.5S RNA. The protein component plays an auxiliary but essential role in vivo by binding to the 5'-leader sequence and broadening the substrate specificity of the ribozyme. The polypeptide is Ribonuclease P protein component (Bacillus cereus (strain ATCC 10987 / NRS 248)).